A 267-amino-acid polypeptide reads, in one-letter code: 4-hydroxy-tetrahydrodipicolinate reductase (267 aa).

Residues 8-13 (GAAGRM) and glutamate 34 contribute to the NAD(+) site. Arginine 35 lines the NADP(+) pocket. Residues 98–100 (GST) and 122–125 (APNM) contribute to the NAD(+) site. Residue histidine 155 is the Proton donor/acceptor of the active site. (S)-2,3,4,5-tetrahydrodipicolinate is bound at residue histidine 156. Residue lysine 159 is the Proton donor of the active site. Position 165-166 (165-166 (GT)) interacts with (S)-2,3,4,5-tetrahydrodipicolinate.

Belongs to the DapB family.

The protein resides in the cytoplasm. The enzyme catalyses (S)-2,3,4,5-tetrahydrodipicolinate + NAD(+) + H2O = (2S,4S)-4-hydroxy-2,3,4,5-tetrahydrodipicolinate + NADH + H(+). The catalysed reaction is (S)-2,3,4,5-tetrahydrodipicolinate + NADP(+) + H2O = (2S,4S)-4-hydroxy-2,3,4,5-tetrahydrodipicolinate + NADPH + H(+). It functions in the pathway amino-acid biosynthesis; L-lysine biosynthesis via DAP pathway; (S)-tetrahydrodipicolinate from L-aspartate: step 4/4. Functionally, catalyzes the conversion of 4-hydroxy-tetrahydrodipicolinate (HTPA) to tetrahydrodipicolinate. The chain is 4-hydroxy-tetrahydrodipicolinate reductase from Pelobacter propionicus (strain DSM 2379 / NBRC 103807 / OttBd1).